The sequence spans 174 residues: Keratin-associated protein 9-2 (174 aa).

A run of 17 repeats spans residues 8–12 (CCQPT), 13–17 (CCRTT), 18–22 (CCRTT), 37–41 (CCQPA), 42–46 (CCVSS), 51–55 (CCRPT), 61–65 (CCRTT), 66–70 (CCQPT), 75–79 (CCQPS), 80–84 (CCSTP), 85–89 (CCQPT), 90–94 (CCGSS), 95–99 (CCGQT), 144–148 (CCRPA), 149–153 (CCETT), 154–158 (CCRTT), and 168–172 (CCQPS). Residues 8-172 (CCQPTCCRTT…TCVSSCCQPS (165 aa)) form a 17 X 5 AA repeats of C-C-[RQVSGE]-[SPTQ]-[TASP] region.

It belongs to the KRTAP type 9 family. In terms of assembly, interacts with hair keratins.

Its function is as follows. In the hair cortex, hair keratin intermediate filaments are embedded in an interfilamentous matrix, consisting of hair keratin-associated proteins (KRTAP), which are essential for the formation of a rigid and resistant hair shaft through their extensive disulfide bond cross-linking with abundant cysteine residues of hair keratins. The matrix proteins include the high-sulfur and high-glycine-tyrosine keratins. The protein is Keratin-associated protein 9-2 (KRTAP9-2) of Homo sapiens (Human).